A 155-amino-acid chain; its full sequence is Ribosome maturation factor RimP (155 aa).

The protein belongs to the RimP family.

It is found in the cytoplasm. Required for maturation of 30S ribosomal subunits. The chain is Ribosome maturation factor RimP from Staphylococcus aureus (strain bovine RF122 / ET3-1).